A 155-amino-acid chain; its full sequence is Cytochrome c-type biogenesis protein CcmE (155 aa).

Topologically, residues 1-8 (MNPLRKKR) are cytoplasmic. Residues 9-29 (LLIIVALLAGVGLAVTLALSA) form a helical; Signal-anchor for type II membrane protein membrane-spanning segment. The Periplasmic segment spans residues 30-155 (LQENINLFYT…AASPTPVKQG (126 aa)). Residues histidine 124 and tyrosine 128 each coordinate heme.

Belongs to the CcmE/CycJ family.

It localises to the cell inner membrane. Functionally, heme chaperone required for the biogenesis of c-type cytochromes. Transiently binds heme delivered by CcmC and transfers the heme to apo-cytochromes in a process facilitated by CcmF and CcmH. In Pseudomonas syringae pv. syringae (strain B728a), this protein is Cytochrome c-type biogenesis protein CcmE.